The chain runs to 570 residues: Proline--tRNA ligase (570 aa).

It belongs to the class-II aminoacyl-tRNA synthetase family. ProS type 1 subfamily. In terms of assembly, homodimer.

The protein localises to the cytoplasm. It catalyses the reaction tRNA(Pro) + L-proline + ATP = L-prolyl-tRNA(Pro) + AMP + diphosphate. Catalyzes the attachment of proline to tRNA(Pro) in a two-step reaction: proline is first activated by ATP to form Pro-AMP and then transferred to the acceptor end of tRNA(Pro). As ProRS can inadvertently accommodate and process non-cognate amino acids such as alanine and cysteine, to avoid such errors it has two additional distinct editing activities against alanine. One activity is designated as 'pretransfer' editing and involves the tRNA(Pro)-independent hydrolysis of activated Ala-AMP. The other activity is designated 'posttransfer' editing and involves deacylation of mischarged Ala-tRNA(Pro). The misacylated Cys-tRNA(Pro) is not edited by ProRS. In Geotalea daltonii (strain DSM 22248 / JCM 15807 / FRC-32) (Geobacter daltonii), this protein is Proline--tRNA ligase.